Reading from the N-terminus, the 303-residue chain is Probable cat1 operon transcriptional activator (303 aa).

The HTH lysR-type domain occupies 1-58 (MDLRQFRYFVAVARERNFTRAARQLNIAQPPLSRQIQLLEEEVGVPLLIRNSRPVQLT). A DNA-binding region (H-T-H motif) is located at residues 18-37 (FTRAARQLNIAQPPLSRQIQ).

It belongs to the LysR transcriptional regulatory family.

Probable positive regulator of the cat1 operon which encode enzymes responsible for the degradation of catechol to acetyl-CoA via the beta-ketoadipate pathway. The sequence is that of Probable cat1 operon transcriptional activator from Acinetobacter lwoffii.